The following is a 584-amino-acid chain: Extracellular serine/threonine protein kinase FAM20C (584 aa).

Over 1 to 10 the chain is Cytoplasmic; sequence MKMMLVRRFR. Residues 1 to 92 constitute a propeptide that is removed on maturation; sequence MKMMLVRRFR…PNKHTLRILQ (92 aa). The helical; Signal-anchor for type II membrane protein transmembrane segment at 11 to 31 threads the bilayer; that stretch reads VLILMVFLVACALHIALDLLP. The Lumenal portion of the chain corresponds to 32–584; that stretch reads RLERRGARPS…DTEHRAASAR (553 aa). 2 disordered regions span residues 62–81 and 94–159; these read QVRGRPGEPPAASSAAGDAG and FSSD…GDAS. Composition is skewed to low complexity over residues 71-81 and 95-112; these read PAASSAAGDAG and SSDPSSNLSSHSLEKLPP. Asparagine 101 carries N-linked (GlcNAc...) asparagine glycosylation. The residue at position 106 (serine 106) is a Phosphoserine. The span at 116–149 shows a compositional bias: basic and acidic residues; that stretch reads PAERALRGRDPGALRPHDPAHRPLLRDPGPRRSE. ATP is bound by residues glutamine 269, lysine 285, and glutamate 306. Glutamate 306 provides a ligand contact to Mn(2+). Asparagine 335 is a glycosylation site (N-linked (GlcNAc...) asparagine). Residues 354–565 are kinase domain; that stretch reads FISPANNICF…AVRDCVERNG (212 aa). 2 disulfide bridges follow: cysteine 362-cysteine 378 and cysteine 367-cysteine 371. 389-392 contributes to the ATP binding site; that stretch reads AAFL. Disulfide bonds link cysteine 426–cysteine 500 and cysteine 501–cysteine 560. The active site involves aspartate 458. Glutamate 463 is a binding site for ATP. N-linked (GlcNAc...) asparagine glycosylation occurs at asparagine 470. Position 478 (aspartate 478) interacts with ATP. Position 478 (aspartate 478) interacts with Mn(2+).

Belongs to the FAM20 family. In terms of assembly, homodimer; disulfide-linked. Interacts with FAM20A; probably forming a heterotetramer of 2 subunits of FAM20A and 2 subunits of FAM20C. Interacts with protease MBTPS1/S1P; the interaction results in FAM20C cleavage and secretion. Interacts with COPII components SEC23A and SEC24A; transport of FAM20C from the endoplasmic reticulum to the Golgi is likely to be mediated by COPII vesicles. Mn(2+) serves as cofactor. Post-translationally, N-glycosylation is required for folding. Autophosphorylated. In terms of processing, propeptide cleavage by MBTPS1/S1P promotes FAM20C secretion and maximal kinase activity which is essential for efficient osteoblast differentiation and biomineralization. As to expression, widely expressed.

The protein resides in the golgi apparatus membrane. It is found in the secreted. It localises to the endoplasmic reticulum. It catalyses the reaction L-seryl-[protein] + ATP = O-phospho-L-seryl-[protein] + ADP + H(+). The catalysed reaction is L-threonyl-[protein] + ATP = O-phospho-L-threonyl-[protein] + ADP + H(+). With respect to regulation, serine/threonine protein kinase activity is increased upon interaction with FAM20A. Golgi serine/threonine protein kinase that phosphorylates secretory pathway proteins within Ser-x-Glu/pSer motifs and plays a key role in biomineralization of bones and teeth. Constitutes the main protein kinase for extracellular proteins, generating the majority of the extracellular phosphoproteome. Mainly phosphorylates proteins within the Ser-x-Glu/pSer motif, but also displays a broader substrate specificity. Phosphorylates ERO1A, enhancing its activity which is required to maintain endoplasmic reticulum redox homeostasis and for oxidative protein folding. During endoplasmic reticulum stress, phosphorylates P4HB/PDIA1 which induces a functional switch, causing P4HB to change from an oxidoreductase to a molecular chaperone. This is critical to maintain ER proteostasis and reduce cell death under ER stress. Phosphorylation of P4HB also promotes its interaction with ERN1, leading to reduced activity of ERN1, a key sensor for the endoplasmic reticulum unfolded protein response. Required for osteoblast differentiation and mineralization. Phosphorylates casein as well as a number of proteins involved in biomineralization such as AMELX, AMTN, ENAM and SPP1/OPN. In addition to its role in biomineralization, also plays a role in lipid homeostasis, wound healing and cell migration and adhesion. In Homo sapiens (Human), this protein is Extracellular serine/threonine protein kinase FAM20C.